We begin with the raw amino-acid sequence, 466 residues long: UDP-N-acetylmuramoylalanine--D-glutamate ligase (466 aa).

121-127 (GTNGKST) is a binding site for ATP.

Belongs to the MurCDEF family.

The protein resides in the cytoplasm. The enzyme catalyses UDP-N-acetyl-alpha-D-muramoyl-L-alanine + D-glutamate + ATP = UDP-N-acetyl-alpha-D-muramoyl-L-alanyl-D-glutamate + ADP + phosphate + H(+). The protein operates within cell wall biogenesis; peptidoglycan biosynthesis. Cell wall formation. Catalyzes the addition of glutamate to the nucleotide precursor UDP-N-acetylmuramoyl-L-alanine (UMA). This is UDP-N-acetylmuramoylalanine--D-glutamate ligase from Bradyrhizobium diazoefficiens (strain JCM 10833 / BCRC 13528 / IAM 13628 / NBRC 14792 / USDA 110).